A 254-amino-acid polypeptide reads, in one-letter code: Ribosomal RNA small subunit methyltransferase G (254 aa).

Residues glycine 92, 143–144, and arginine 156 contribute to the S-adenosyl-L-methionine site; that span reads AE.

It belongs to the methyltransferase superfamily. RNA methyltransferase RsmG family.

The protein localises to the cytoplasm. In terms of biological role, specifically methylates the N7 position of a guanine in 16S rRNA. The protein is Ribosomal RNA small subunit methyltransferase G of Leptospira interrogans serogroup Icterohaemorrhagiae serovar copenhageni (strain Fiocruz L1-130).